Reading from the N-terminus, the 383-residue chain is S-adenosylmethionine synthase (383 aa).

His15 lines the ATP pocket. Residue Asp17 coordinates Mg(2+). Glu43 is a K(+) binding site. L-methionine is bound by residues Glu56 and Gln99. Residues 99 to 109 (QSPDINQGVDR) form a flexible loop region. ATP contacts are provided by residues 164-166 (DAK), 230-231 (RF), Asp239, 245-246 (RK), Ala262, and Lys266. Residue Asp239 participates in L-methionine binding. An L-methionine-binding site is contributed by Lys270.

It belongs to the AdoMet synthase family. As to quaternary structure, homotetramer; dimer of dimers. Requires Mg(2+) as cofactor. The cofactor is K(+).

Its subcellular location is the cytoplasm. The catalysed reaction is L-methionine + ATP + H2O = S-adenosyl-L-methionine + phosphate + diphosphate. The protein operates within amino-acid biosynthesis; S-adenosyl-L-methionine biosynthesis; S-adenosyl-L-methionine from L-methionine: step 1/1. Its function is as follows. Catalyzes the formation of S-adenosylmethionine (AdoMet) from methionine and ATP. The overall synthetic reaction is composed of two sequential steps, AdoMet formation and the subsequent tripolyphosphate hydrolysis which occurs prior to release of AdoMet from the enzyme. The protein is S-adenosylmethionine synthase of Shewanella baltica (strain OS155 / ATCC BAA-1091).